We begin with the raw amino-acid sequence, 331 residues long: DNA-directed RNA polymerase subunit alpha (331 aa).

Residues 1–233 are alpha N-terminal domain (alpha-NTD); that stretch reads MVREEIAVST…DLFLPFLHAE (233 aa). The interval 268–331 is alpha C-terminal domain (alpha-CTD); sequence ALKRVFIDQS…GILQKRFAID (64 aa).

It belongs to the RNA polymerase alpha chain family. As to quaternary structure, in plastids the minimal PEP RNA polymerase catalytic core is composed of four subunits: alpha, beta, beta', and beta''. When a (nuclear-encoded) sigma factor is associated with the core the holoenzyme is formed, which can initiate transcription.

Its subcellular location is the plastid. It localises to the chloroplast. The enzyme catalyses RNA(n) + a ribonucleoside 5'-triphosphate = RNA(n+1) + diphosphate. Functionally, DNA-dependent RNA polymerase catalyzes the transcription of DNA into RNA using the four ribonucleoside triphosphates as substrates. The protein is DNA-directed RNA polymerase subunit alpha of Illicium oligandrum (Star anise).